The following is a 137-amino-acid chain: Glutaredoxin-C9 (137 aa).

In terms of domain architecture, Glutaredoxin spans Gly32–Trp136. Cys52 and Cys55 are joined by a disulfide. The short motif at Ala134–Leu137 is the Responsive for interaction with TGA factors element.

The protein belongs to the glutaredoxin family. CC-type subfamily. As to quaternary structure, interacts with TGA2 and TGA6.

The protein localises to the cytoplasm. The protein resides in the nucleus. Has a glutathione-disulfide oxidoreductase activity in the presence of NADPH and glutathione reductase. Reduces low molecular weight disulfides and proteins. This chain is Glutaredoxin-C9 (GRXC9), found in Arabidopsis thaliana (Mouse-ear cress).